The primary structure comprises 233 residues: Hydroxyacylglutathione hydrolase (233 aa).

H52, H54, D56, H57, H108, D125, and H163 together coordinate Zn(2+).

The protein belongs to the metallo-beta-lactamase superfamily. Glyoxalase II family. In terms of assembly, monomer. The cofactor is Zn(2+).

It carries out the reaction an S-(2-hydroxyacyl)glutathione + H2O = a 2-hydroxy carboxylate + glutathione + H(+). It participates in secondary metabolite metabolism; methylglyoxal degradation; (R)-lactate from methylglyoxal: step 2/2. Its function is as follows. Thiolesterase that catalyzes the hydrolysis of S-D-lactoyl-glutathione to form glutathione and D-lactic acid. This is Hydroxyacylglutathione hydrolase from Actinobacillus succinogenes (strain ATCC 55618 / DSM 22257 / CCUG 43843 / 130Z).